The following is a 164-amino-acid chain: T-cell surface glycoprotein CD3 zeta chain (164 aa).

Residues 1–21 form the signal peptide; sequence MKWKVSVLACILHVRFPGAEA. Residue Gln-22 is modified to Blocked amino end (Gln). Residues 22–30 are Extracellular-facing; it reads QSFGLLDPK. The helical transmembrane segment at 31–51 threads the bilayer; sequence LCYLLDGILFIYGVIITALYL. At 52–164 the chain is on the cytoplasmic side; the sequence is RAKFSRSAET…ALHMQTLAPR (113 aa). Ser-58 is subject to Phosphoserine. 3 ITAM domains span residues 61 to 89, 100 to 128, and 131 to 159; these read TAAN…LEKK, QQRR…EIGT, and ERRR…LHMQ. Phosphotyrosine is present on residues Tyr-72 and Tyr-83. The segment covering 87–96 has biased composition (basic and acidic residues); that stretch reads EKKRARDPEM. The segment at 87–111 is disordered; the sequence is EKKRARDPEMGGKQQRRRNPQEGVY. Residues Tyr-111, Tyr-123, Tyr-142, and Tyr-153 each carry the phosphotyrosine modification. Positions 124–143 are disordered; sequence SEIGTKGERRRGKGHDGLYQ.

It belongs to the CD3Z/FCER1G family. In terms of assembly, the TCR-CD3 complex is composed of a CD3D/CD3E and a CD3G/CD3E heterodimers that preferentially associate with TCRalpha and TCRbeta, respectively, to form TCRalpha/CD3E/CD3G and TCRbeta/CD3G/CD3E trimers. In turn, the hexamer interacts with CD3Z homodimer to form the TCR-CD3 complex. Alternatively, TCRalpha and TCRbeta can be replaced by TCRgamma and TCRdelta. Interacts with SLA. Interacts with SLA2. Interacts with TRAT1. Interacts with DOCK2. Interacts with SHB. Interacts with ZAP70. Interacts (tyrosine phosphorylated) with SHC1 (via SH2 domain). Interacts with PTPRC. Interacts with CRK; this interaction regulates CD3Z phosphorylation. Interacts (on T cell side) with CD81, ICAM1 and CD9 at immunological synapses between antigen-presenting cells and T cells. Interacts with CD160. Interacts with LY6E. Interacts with LY6E. The signaling subunit of immunoglobulin gamma (IgG) Fc receptor complex. As a homodimer or a heterodimer with FCER1G, associates with the ligand binding subunit FCGR3A (via transmembrane domain); this interaction is a prerequisite for Fc receptor complex expression on the cell surface. Interacts with CD5. Phosphorylated on Tyr residues after T-cell receptor triggering by LCK in association with CD4/CD8. CD3Z is expressed in normal lymphoid tissue and in peripheral blood mononuclear cells (PBMCs). Expressed also in retinal ganglion cells.

Its subcellular location is the cell membrane. Functionally, part of the TCR-CD3 complex present on T-lymphocyte cell surface that plays an essential role in adaptive immune response. When antigen presenting cells (APCs) activate T-cell receptor (TCR), TCR-mediated signals are transmitted across the cell membrane by the CD3 chains CD3D, CD3E, CD3G and CD3Z. All CD3 chains contain immunoreceptor tyrosine-based activation motifs (ITAMs) in their cytoplasmic domain. Upon TCR engagement, these motifs become phosphorylated by Src family protein tyrosine kinases LCK and FYN, resulting in the activation of downstream signaling pathways. CD3Z ITAMs phosphorylation creates multiple docking sites for the protein kinase ZAP70 leading to ZAP70 phosphorylation and its conversion into a catalytically active enzyme. Plays an important role in intrathymic T-cell differentiation. Additionally, participates in the activity-dependent synapse formation of retinal ganglion cells (RGCs) in both the retina and dorsal lateral geniculate nucleus (dLGN). The sequence is that of T-cell surface glycoprotein CD3 zeta chain (Cd247) from Mus musculus (Mouse).